We begin with the raw amino-acid sequence, 331 residues long: MNLNAPFSPQPPLAAEHLPLTLMRLDDWLPINVSGPDAQSYLQGQLTADLPSLAATQHTLCGHCDAQGKLWSSLRLLRRRDGFTYLLRRSVATLQMLELKKYAVFAKASIVSDEGAVLLGVAGAQASEALGALFPRLPDADAPLLQAGRSHLLYMAWPQPRYLLICDDADEAERIFAPLSARARLADSAQWLALDIESGIPLIDEPNCDSFLPQAVNLQALGGISFTKGCYSGQEMVARAKYRGANRRALFWLRGSAERLPHASEDLELRLGDSWRRSGTVLAAQRLADGGVYLQAVLSSDLPADSVLRVRDDARSQLTLSPLPYSTDQQE.

Folate-binding residues include W28 and W191.

Belongs to the tRNA-modifying YgfZ family.

It localises to the cytoplasm. Its function is as follows. Folate-binding protein involved in regulating the level of ATP-DnaA and in the modification of some tRNAs. It is probably a key factor in regulatory networks that act via tRNA modification, such as initiation of chromosomal replication. In Edwardsiella ictaluri (strain 93-146), this protein is tRNA-modifying protein YgfZ.